The sequence spans 238 residues: MPKKLSKRFKEALAKVDQNQTYAPLEALQLLKETATAKFNESAEAHIRLGIDPKYTDQQLRTTVSLPKGTGQEVRVAVIARGEKVQEANNAGADIVGSEELIEEIFKGMMDFEVLIATPDMMPKVAKLGRLLGPRGLMPSPKGGTVTADLTNAITEFKAGKLEFRADRTGIVHVMFGKASFTPEDLLANLKALQETVDRNRPSGAKGRYWRSVFVSASMGPSIAVDINALRDLKLTEV.

This sequence belongs to the universal ribosomal protein uL1 family. Part of the 50S ribosomal subunit.

In terms of biological role, binds directly to 23S rRNA. The L1 stalk is quite mobile in the ribosome, and is involved in E site tRNA release. Functionally, protein L1 is also a translational repressor protein, it controls the translation of the L11 operon by binding to its mRNA. The protein is Large ribosomal subunit protein uL1 of Rippkaea orientalis (strain PCC 8801 / RF-1) (Cyanothece sp. (strain PCC 8801)).